We begin with the raw amino-acid sequence, 211 residues long: Minor capsid protein VP2 (211 aa).

The protein belongs to the norovirus VP2 family. In terms of assembly, homooligomer. The portal-like structure consists in 12 copies of VP2. Interacts with capsid protein VP1.

The protein localises to the virion. It localises to the host cytoplasm. In terms of biological role, minor structural protein that forms a portal-like structure at a unique three-fold axis of symmetry, following binding to the host receptor. The channel formed by VP2 may allow the delivery of the viral genome through the host endosomal membrane. The polypeptide is Minor capsid protein VP2 (Homo sapiens (Human)).